Reading from the N-terminus, the 233-residue chain is Protein Thf1 (233 aa).

A coiled-coil region spans residues 183–205 (DKLSKDLELYRSNLDKMTQALAV). The segment at 213-233 (DRKKREQRQQQASTPVAPPNE) is disordered.

The protein belongs to the THF1 family.

May be involved in photosynthetic membrane biogenesis. The polypeptide is Protein Thf1 (Trichormus variabilis (strain ATCC 29413 / PCC 7937) (Anabaena variabilis)).